A 662-amino-acid polypeptide reads, in one-letter code: Transketolase (662 aa).

Histidine 28 lines the substrate pocket. Residues histidine 68 and 115–117 (GPL) contribute to the thiamine diphosphate site. Position 156 (aspartate 156) interacts with Mg(2+). Glycine 157 and asparagine 186 together coordinate thiamine diphosphate. Residues asparagine 186 and isoleucine 188 each coordinate Mg(2+). Substrate contacts are provided by histidine 261, arginine 356, and serine 383. A thiamine diphosphate-binding site is contributed by histidine 261. The Proton donor role is filled by glutamate 410. Phenylalanine 436 lines the thiamine diphosphate pocket. The substrate site is built by histidine 460, aspartate 468, and arginine 519.

Belongs to the transketolase family. In terms of assembly, homodimer. Mg(2+) is required as a cofactor. It depends on Ca(2+) as a cofactor. The cofactor is Mn(2+). Requires Co(2+) as cofactor. Thiamine diphosphate serves as cofactor.

It carries out the reaction D-sedoheptulose 7-phosphate + D-glyceraldehyde 3-phosphate = aldehydo-D-ribose 5-phosphate + D-xylulose 5-phosphate. It functions in the pathway carbohydrate biosynthesis; Calvin cycle. It participates in carbohydrate degradation; pentose phosphate pathway. Functionally, catalyzes the transfer of a two-carbon ketol group from a ketose donor to an aldose acceptor, via a covalent intermediate with the cofactor thiamine pyrophosphate. The polypeptide is Transketolase (tkt) (Staphylococcus aureus (strain COL)).